A 674-amino-acid chain; its full sequence is Ribonuclease E (674 aa).

In terms of domain architecture, S1 motif spans 35–117; sequence GDIYLGLVDN…LTGNISMPGR (83 aa). 2 residues coordinate Mg(2+): D296 and D339. Positions 397 and 400 each coordinate Zn(2+). 2 disordered regions span residues 458 to 529 and 626 to 674; these read PLDL…RRVE and QPRE…SSAE. Composition is skewed to basic and acidic residues over residues 484 to 493 and 509 to 529; these read GSEFSEKENI and TKEK…RRVE. Residues 663–674 show a composition bias toward basic residues; the sequence is RPGRRRRRSSAE. Positions 665 to 673 match the C4 Arg-rich motif, probably responsible for interaction with PNPase motif; that stretch reads GRRRRRSSA.

The protein belongs to the RNase E/G family. Fractionates in a 250-300 kDa region, which is too small to be the equivalent of an RNA degradosome, as occurs with E.coli RNase E. Interacts with polynucleotide phosphorylase (PNPase, pnp), probably via the C4 Arg-rich motif (residues 665-673). Requires Mg(2+) as cofactor.

Its subcellular location is the cytoplasm. The protein resides in the cell inner membrane. It carries out the reaction Endonucleolytic cleavage of single-stranded RNA in A- and U-rich regions.. In terms of biological role, endoribonuclease that plays a central role in rRNA processing and mRNA decay, and probably tRNA processing. Acts on 9S rRNA (the precursor of 5S rRNA) and RNAI, a molecule that controls the replication of ColE1 plasmid. Upon expression in E.coli does not purify with endogenous degradosome proteins. Prefers 5'-monophosphorylated substrates over 5'-triphosphorylated substrates. Complements an rne temperature-sensitive mutation in E.coli, despite being considerably shorter and not able to interact with the E.coli degradosome. Cleaves AU-rich sequences in vitro, tested with psbA2 mRNA. Complements both an rne temperature-sensitive mutation and an rng deletion in E.coli. Acts in the degradation of psaL mRNA in the presence but not the absence of the sRNA PsrR1. Cleaves the rimO-crhR transcript, contributing to the very short half-life of rimO mRNA. MRNA for psbA2, one of the core proteins in photosystem II, is degraded in the dark under control of a cis-acting AU-rich box in its 5'-UTR. RNase E cuts in this box, suggesting it is involved in this dark-induced mRNA instability. Functionally, CRISPR (clustered regularly interspaced short palindromic repeat) is an adaptive immune system that provides protection against mobile genetic elements (viruses, transposable elements and conjugative plasmids). CRISPR clusters contain spacers, sequences complementary to antecedent mobile elements, and target invading nucleic acids. CRISPR clusters are transcribed and processed into CRISPR RNA (crRNA). Endogenous RNase E is required for correct processing of pre-crRNA for the CRISPR3 subtype III-B system in this genome (genes sll7080 to sll7095). This CRISPR3 system does not include a cas6 gene, which is the usual RNase involved in crRNA maturation. The polypeptide is Ribonuclease E (Synechocystis sp. (strain ATCC 27184 / PCC 6803 / Kazusa)).